Reading from the N-terminus, the 215-residue chain is UPF0056 membrane protein YhcE (215 aa).

A run of 6 helical transmembrane segments spans residues 14-34, 54-74, 81-101, 120-140, 147-167, and 189-209; these read FFIG…FISM, VAII…LFGI, IAGG…KLGE, VVPL…TIVW, ISYL…CWGL, and IMGL…IKGI.

It belongs to the UPF0056 (MarC) family.

It is found in the cell membrane. The sequence is that of UPF0056 membrane protein YhcE (ychE) from Escherichia coli (strain K12).